The chain runs to 154 residues: Probable transport accessory protein MmpS4 (154 aa).

2 consecutive transmembrane segments (helical) span residues 19-39 (IWIP…VYRV) and 97-117 (QLPW…NLVA).

It belongs to the MmpS family.

It is found in the cell membrane. This Mycobacterium leprae (strain TN) protein is Probable transport accessory protein MmpS4.